Reading from the N-terminus, the 504-residue chain is Subtilisin-like protease 1 (504 aa).

The signal sequence occupies residues 1-19 (MGVFRFISISLAAVSAANA). A propeptide spanning residues 20–116 (AQILSMPHAQ…VEPDTIVSVH (97 aa)) is cleaved from the precursor. The 83-residue stretch at 34–116 (SYIVMMKDDT…VEPDTIVSVH (83 aa)) folds into the Inhibitor I9 domain. The Peptidase S8 domain occupies 126–400 (SWGLARISNP…NVLINNGGAK (275 aa)). Active-site charge relay system residues include D158 and H190. The disordered stretch occupies residues 172–198 (AIWGSNQVNDGDDRDGSGHGTHTSGTM). N-linked (GlcNAc...) asparagine glycans are attached at residues N233 and N251. Residues 282 to 294 (NDNQDAQSSSPAS) show a composition bias toward polar residues. Residues 282–312 (NDNQDAQSSSPASEPSVCTVGSSAEDDSRSS) are disordered. The active-site Charge relay system is S345. Positions 378 to 394 (TSSITDAGPGTPTNVLI) are enriched in polar residues. A disordered region spans residues 378 to 483 (TSSITDAGPG…YPGGDNFDFD (106 aa)). Pro residues-rich tracts occupy residues 405–449 (NPNP…PGQP) and 457–473 (APAP…PHTP).

Belongs to the peptidase S8 family.

The protein localises to the secreted. Its function is as follows. Secreted subtilisin-like serine protease with keratinolytic activity that contributes to pathogenicity. The polypeptide is Subtilisin-like protease 1 (SUB1) (Trichophyton rubrum (Athlete's foot fungus)).